The following is a 382-amino-acid chain: Carboxynorspermidine/carboxyspermidine decarboxylase (382 aa).

Lysine 41 carries the N6-(pyridoxal phosphate)lysine modification. Substrate contacts are provided by glutamate 236 and aspartate 272.

This sequence belongs to the Orn/Lys/Arg decarboxylase class-II family. NspC subfamily. Homodimer. Pyridoxal 5'-phosphate is required as a cofactor.

Its subcellular location is the cytoplasm. It carries out the reaction carboxynorspermidine + H(+) = norspermidine + CO2. The catalysed reaction is carboxyspermidine + H(+) = spermidine + CO2. In terms of biological role, catalyzes the decarboxylation of carboxynorspermidine and carboxyspermidine in vitro. In vivo, responsible for synthesizing spermidine, but not sym-norspermidine. The polypeptide is Carboxynorspermidine/carboxyspermidine decarboxylase (Campylobacter jejuni subsp. jejuni serotype O:6 (strain 81116 / NCTC 11828)).